A 405-amino-acid polypeptide reads, in one-letter code: MATAWYKQVNPPQRKALFSAWLGYVFDGFDFMMIFYILHIIKADLGITDIQATLIGTVAFIARPIGGGFFGAMADKYGRKPMMMWAIFIYSVGTGLSGIATNLYMLAVCRFIVGLGMSGEYACASTYAVESWPKNLQSKASAFLVSGFSVGNIIAAQIIPQFAEVYGWRNSFFIGLLPVLLVLWIRKSAPESQEWIEDKYKDKSTFLSVFRKPHLSISMIVFLVCFCLFGANWPINGLLPSYLADNGVNTVVISTLMTIAGLGTLTGTIFFGFVGDKIGVKKAFVVGLITSFIFLCPLFFISVKNSSLIGLCLFGLMFTNLGIAGLVPKFIYDYFPTKLRGLGTGLIYNLGATGGMAAPVLATYISGYYGLGVSLFIVTVAFSALLILLVGFDIPGKIYKLSVAK.

Residues 1–20 lie on the Cytoplasmic side of the membrane; the sequence is MATAWYKQVNPPQRKALFSA. A helical membrane pass occupies residues 21–41; the sequence is WLGYVFDGFDFMMIFYILHII. Residues 42 to 53 lie on the Periplasmic side of the membrane; it reads KADLGITDIQAT. Residues 54–74 traverse the membrane as a helical segment; sequence LIGTVAFIARPIGGGFFGAMA. Topologically, residues 75–80 are cytoplasmic; sequence DKYGRK. A helical membrane pass occupies residues 81–101; it reads PMMMWAIFIYSVGTGLSGIAT. A topological domain (periplasmic) is located at residue Asn-102. A helical membrane pass occupies residues 103–123; sequence LYMLAVCRFIVGLGMSGEYAC. Residues 124–139 are Cytoplasmic-facing; sequence ASTYAVESWPKNLQSK. Residues 140–160 traverse the membrane as a helical segment; that stretch reads ASAFLVSGFSVGNIIAAQIIP. Topologically, residues 161 to 164 are periplasmic; sequence QFAE. The chain crosses the membrane as a helical span at residues 165–185; it reads VYGWRNSFFIGLLPVLLVLWI. Residues 186–214 lie on the Cytoplasmic side of the membrane; the sequence is RKSAPESQEWIEDKYKDKSTFLSVFRKPH. The chain crosses the membrane as a helical span at residues 215 to 235; it reads LSISMIVFLVCFCLFGANWPI. The Periplasmic segment spans residues 236-250; it reads NGLLPSYLADNGVNT. A helical membrane pass occupies residues 251 to 271; that stretch reads VVISTLMTIAGLGTLTGTIFF. The Cytoplasmic portion of the chain corresponds to 272–282; that stretch reads GFVGDKIGVKK. A helical membrane pass occupies residues 283-303; sequence AFVVGLITSFIFLCPLFFISV. At 304-307 the chain is on the periplasmic side; that stretch reads KNSS. A helical transmembrane segment spans residues 308-328; it reads LIGLCLFGLMFTNLGIAGLVP. Topologically, residues 329-344 are cytoplasmic; the sequence is KFIYDYFPTKLRGLGT. The helical transmembrane segment at 345–365 threads the bilayer; that stretch reads GLIYNLGATGGMAAPVLATYI. The Periplasmic segment spans residues 366 to 371; the sequence is SGYYGL. The chain crosses the membrane as a helical span at residues 372-392; it reads GVSLFIVTVAFSALLILLVGF. The Cytoplasmic segment spans residues 393-405; the sequence is DIPGKIYKLSVAK.

It belongs to the major facilitator superfamily. Sugar transporter (TC 2.A.1.1) family.

Its subcellular location is the cell inner membrane. Functionally, probably transports across the inner membrane the two dehydrated forms of N-acetylneuraminate (Neu5Ac), 2,7-anhydro-N-acetylneuraminate (2,7-AN) and 2-deoxy-2,3-didehydro-N-acetylneuraminate (2,3-EN). This Escherichia coli (strain K12) protein is Sialic acid transporter NanX.